The following is a 479-amino-acid chain: MASLARAMLALLALYAAAIAAAPSTTTALDTTPNGGGGGNSSEGELSPSPPPTPAPASPEAGAVSTPPVPPPSVSRRKPPRNNNRTRVHGDKATAHGRKRIVCRERLFSARVGDAVSFGCAVFPRAGETFEVRFYRRGRFRSPDADPEYFDEPPRPELPRERLLFSSANASLAHADALAPVVVEGERATVANVSGEVSVRVAAADAETEGVYTWRVLSANGTEVRSANVSLLLYSQPEFGLSAPPVLFGEPFRAVCVVRDYYPRRSVRLRWFADEHPVDAAFVTNSTVADELGRRTRVSVVNVTRADVPGLAAADAADALAPSLRCEAVWYRDSVASQRFSEALRPHVYHPAAVSVRFVEGFAVCDGLCVPPEARLAWSDHAADTVYHLGACAEHPGLLNVRSARPLSDLDGPVDYTCRLEGLPSQLPVFEDTQRYDASPASVSWPVVSSMIVVIAGIGILAIVLVIMATCVYYRQAGP.

Positions 1-22 (MASLARAMLALLALYAAAIAAA) are cleaved as a signal peptide. The Virion surface portion of the chain corresponds to 23–451 (PSTTTALDTT…SVSWPVVSSM (429 aa)). The disordered stretch occupies residues 26–96 (TTALDTTPNG…RVHGDKATAH (71 aa)). N40 carries an N-linked (GlcNAc...) asparagine; by host glycan. The span at 48–57 (PSPPPTPAPA) shows a compositional bias: pro residues. The segment at 75–82 (SRRKPPRN) is HDB1. Basic residues predominate over residues 75-87 (SRRKPPRNNNRTR). The N-linked (GlcNAc...) asparagine; by host glycan is linked to N84. The HDB2 stretch occupies residues 95–101 (AHGRKRI). C103 and C120 are joined by a disulfide. The interval 135 to 140 (YRRGRF) is HDB3. Residues N169, N192, N220, N228, N285, and N302 are each glycosylated (N-linked (GlcNAc...) asparagine; by host). 3 disulfides stabilise this stretch: C256–C326, C365–C418, and C369–C392. A helical membrane pass occupies residues 452–472 (IVVIAGIGILAIVLVIMATCV). Topologically, residues 473–479 (YYRQAGP) are cytoplasmic.

This sequence belongs to the herpesviridae glycoprotein C family. As to quaternary structure, interacts with host complement component C3; this interaction inhibits host immune response by disregulating complement cascade.

It is found in the virion membrane. In terms of biological role, essential for the initial attachment to heparan sulfate moieties of the host cell surface proteoglycans. Plays also a role in host immune evasion by inhibiting the host complement cascade activation. This chain is Envelope glycoprotein C homolog (gC), found in Suid herpesvirus 1 (strain Indiana-Funkhauser / Becker) (SuHV-1).